Here is a 227-residue protein sequence, read N- to C-terminus: Cytochrome c oxidase subunit 2 (227 aa).

Topologically, residues 1–26 (MNTWMNFNLQNSNSPLMEQLMFFHNH) are mitochondrial intermembrane. Residues 27–48 (SMLIILLITILVGYIMSSLLYN) form a helical membrane-spanning segment. Topologically, residues 49–62 (KLYNRYLLESQNVE) are mitochondrial matrix. The chain crosses the membrane as a helical span at residues 63–82 (IIWTILPAFMLIFIALPSLR). Over 83–227 (LLYLLDDSNS…SFIKWISSNS (145 aa)) the chain is Mitochondrial intermembrane. Histidine 161, cysteine 196, glutamate 198, cysteine 200, histidine 204, and methionine 207 together coordinate Cu cation. Glutamate 198 contributes to the Mg(2+) binding site.

This sequence belongs to the cytochrome c oxidase subunit 2 family. As to quaternary structure, component of the cytochrome c oxidase (complex IV, CIV), a multisubunit enzyme composed of a catalytic core of 3 subunits and several supernumerary subunits. The complex exists as a monomer or a dimer and forms supercomplexes (SCs) in the inner mitochondrial membrane with ubiquinol-cytochrome c oxidoreductase (cytochrome b-c1 complex, complex III, CIII). Cu cation is required as a cofactor.

It localises to the mitochondrion inner membrane. It catalyses the reaction 4 Fe(II)-[cytochrome c] + O2 + 8 H(+)(in) = 4 Fe(III)-[cytochrome c] + 2 H2O + 4 H(+)(out). Its function is as follows. Component of the cytochrome c oxidase, the last enzyme in the mitochondrial electron transport chain which drives oxidative phosphorylation. The respiratory chain contains 3 multisubunit complexes succinate dehydrogenase (complex II, CII), ubiquinol-cytochrome c oxidoreductase (cytochrome b-c1 complex, complex III, CIII) and cytochrome c oxidase (complex IV, CIV), that cooperate to transfer electrons derived from NADH and succinate to molecular oxygen, creating an electrochemical gradient over the inner membrane that drives transmembrane transport and the ATP synthase. Cytochrome c oxidase is the component of the respiratory chain that catalyzes the reduction of oxygen to water. Electrons originating from reduced cytochrome c in the intermembrane space (IMS) are transferred via the dinuclear copper A center (CU(A)) of subunit 2 and heme A of subunit 1 to the active site in subunit 1, a binuclear center (BNC) formed by heme A3 and copper B (CU(B)). The BNC reduces molecular oxygen to 2 water molecules using 4 electrons from cytochrome c in the IMS and 4 protons from the mitochondrial matrix. The sequence is that of Cytochrome c oxidase subunit 2 (COII) from Ctenocephalides felis (Cat flea).